Reading from the N-terminus, the 200-residue chain is NAD(P)H dehydrogenase (quinone) (200 aa).

A Flavodoxin-like domain is found at 4 to 190 (VLVLYYSTYG…EGARFQGRHV (187 aa)). Residues 10-15 (STYGHV) and 78-80 (TRY) each bind FMN. Residue Tyr12 coordinates NAD(+). Residue Trp98 coordinates substrate. FMN contacts are provided by residues 113–119 (STASQHG) and His134.

It belongs to the WrbA family. The cofactor is FMN.

It catalyses the reaction a quinone + NADH + H(+) = a quinol + NAD(+). The enzyme catalyses a quinone + NADPH + H(+) = a quinol + NADP(+). This is NAD(P)H dehydrogenase (quinone) from Methylobacterium radiotolerans (strain ATCC 27329 / DSM 1819 / JCM 2831 / NBRC 15690 / NCIMB 10815 / 0-1).